Reading from the N-terminus, the 386-residue chain is Probable copper-dependent oxygenase M1 (386 aa).

The first 22 residues, 1 to 22 (MLRMKKICTAFLTIALCTHVLA), serve as a signal peptide directing secretion. Asn-86 is a glycosylation site (N-linked (GlcNAc...) asparagine). The helical transmembrane segment at 334–354 (FVVPIAAIAFIALTIGAGYVF) threads the bilayer.

Belongs to the clz3 oxygenase family.

It localises to the membrane. The protein operates within secondary metabolite biosynthesis. Its function is as follows. Probable copper-dependent oxygenase; part of the gene cluster that mediates the biosynthesis of squalestatin S1 (SQS1, also known as zaragozic acid A), a heavily oxidized fungal polyketide that offers potent cholesterol lowering activity by targeting squalene synthase (SS). SQS1 is composed of a 2,8-dioxobicyclic[3.2.1]octane-3,4,5-tricarboxyclic acid core that is connected to two lipophilic polyketide arms. These initial steps feature the priming of an unusual benzoic acid starter unit onto the highly reducing polyketide synthase pks2, followed by oxaloacetate extension and product release to generate a tricarboxylic acid containing product. The phenylalanine ammonia lyase (PAL) M7 and the acyl-CoA ligase M9 are involved in transforming phenylalanine into benzoyl-CoA. The citrate synthase-like protein R3 is involved in connecting the C-alpha-carbons of the hexaketide chain and oxaloacetate to afford the tricarboxylic acid unit. The potential hydrolytic enzymes, M8 and M10, are in close proximity to pks2 and may participate in product release. On the other side, the tetraketide arm is synthesized by a the squalestatin tetraketide synthase pks1 and enzymatically esterified to the core in the last biosynthetic step, by the acetyltransferase M4. The biosynthesis of the tetraketide must involve 3 rounds of chain extension. After the first and second rounds methyl-transfer occurs, and in all rounds of extension the ketoreductase and dehydratase are active. The enoyl reductase and C-MeT of pks1 are not active in the final round of extension. The acetyltransferase M4 appears to have a broad substrate selectivity for its acyl CoA substrate, allowing the in vitro synthesis of novel squalestatins. The biosynthesis of SQS1 requires several oxidative steps likely performed by oxidoreductases M1, R1 and R2. Finally, in support of the identification of the cluster as being responsible for SQS1 production, the cluster contains a gene encoding a putative squalene synthase (SS) R6, suggesting a likely mechanism for self-resistance. The polypeptide is Probable copper-dependent oxygenase M1 (Phoma sp. (strain ATCC 20986 / MF5453)).